The sequence spans 500 residues: Lysine--tRNA ligase (500 aa).

Glu-410 and Glu-417 together coordinate Mg(2+).

It belongs to the class-II aminoacyl-tRNA synthetase family. As to quaternary structure, homodimer. Mg(2+) serves as cofactor.

The protein localises to the cytoplasm. It catalyses the reaction tRNA(Lys) + L-lysine + ATP = L-lysyl-tRNA(Lys) + AMP + diphosphate. The protein is Lysine--tRNA ligase of Shewanella sediminis (strain HAW-EB3).